Consider the following 316-residue polypeptide: Glycine--tRNA ligase alpha subunit (316 aa).

The protein belongs to the class-II aminoacyl-tRNA synthetase family. Tetramer of two alpha and two beta subunits.

It localises to the cytoplasm. It carries out the reaction tRNA(Gly) + glycine + ATP = glycyl-tRNA(Gly) + AMP + diphosphate. This Cupriavidus taiwanensis (strain DSM 17343 / BCRC 17206 / CCUG 44338 / CIP 107171 / LMG 19424 / R1) (Ralstonia taiwanensis (strain LMG 19424)) protein is Glycine--tRNA ligase alpha subunit.